Consider the following 404-residue polypeptide: Argininosuccinate synthase (404 aa).

ATP contacts are provided by residues 10–18 and A37; that span reads AYSGGLDTS. L-citrulline-binding residues include Y90 and S95. Residue G120 participates in ATP binding. T122, N126, and D127 together coordinate L-aspartate. N126 serves as a coordination point for L-citrulline. L-citrulline contacts are provided by R130, S181, S190, E266, and Y278.

The protein belongs to the argininosuccinate synthase family. Type 1 subfamily. In terms of assembly, homotetramer.

The protein localises to the cytoplasm. The enzyme catalyses L-citrulline + L-aspartate + ATP = 2-(N(omega)-L-arginino)succinate + AMP + diphosphate + H(+). Its pathway is amino-acid biosynthesis; L-arginine biosynthesis; L-arginine from L-ornithine and carbamoyl phosphate: step 2/3. In Erythrobacter litoralis (strain HTCC2594), this protein is Argininosuccinate synthase.